Consider the following 768-residue polypeptide: MTDTSHKKEGFKKCRSATFSIDGYSFTIVANEAGDKNARPLARFSRSKSQNCLWNSLIDGLTGNVKEKPRPTIVQDTRPPEEILADELPQLDSPEALVKTSFRLRSLVKQLERGEASVVDLKKNLEYAATVLESVYIDETRRLLDTEDELSDIQSDAVPSEVRDWLASTFTRQMGMMLRRSDEKPRFKSIVHAVQAGIFVERMYRRTSNMVGLSYPPAVIDALKDVDTWSFDVFSLNEASGDHALKFIFYELLTRYDLISRFKIPISALVSFVEALEVGYSKHKNPYHNLMHAADVTQTVHYLLYKTGVANWLTELEIFAIIFSAAIHDYEHTGTTNNFHIQTRSDPAILYNDRSVLENHHLSAAYRLLQEDEEMNILVNLSKDDWREFRTLVIEMVMATDMSCHFQQIKAMKTALQQPEAIEKPKALSLMLHTADISHPAKAWDLHHRWTMSLLEEFFRQGDREAELGLPFSPLCDRKSTMVAQSQVGFIDFIVEPTFTVLTDMTEKIVSPLIDETSQTGGTGQRRSSLNSINSSDAKRSGVKSSGSEGSAPINNSVIPVDYKSFKATWTEVVQINRERWRAKVPKEEKAKKEAEEKARLAAEEKQKEMEAKSQAEQGTTSKAEKKTSGETKGQVNGTRTSKGDNPRGKNSKGDKAGEKQQNGDLKDGKNKADKKDHSNTGNESKKADGTKKRSHGSPAPSTSSTSRLTLPVIKPPLRHFKRPAYASSSYAPSVPKKTDDHPVRYKMLDQRIKIKKIQNISHHWNKK.

Met1 bears the N-acetylmethionine mark. Residues 183–206 are calmodulin-binding; sequence EKPRFKSIVHAVQAGIFVERMYRR. The 378-residue stretch at 211 to 588 folds into the PDEase domain; it reads VGLSYPPAVI…ERWRAKVPKE (378 aa). Residue His288 is the Proton donor of the active site. Zn(2+) contacts are provided by His292, His328, Asp329, and Asp436. Asp329 is a binding site for Mg(2+). Disordered stretches follow at residues 513–557 and 584–719; these read LIDE…INNS and KVPK…PPLR. 2 stretches are compositionally biased toward polar residues: residues 516 to 536 and 543 to 557; these read ETSQ…INSS and VKSS…INNS. Positions 584 to 614 are enriched in basic and acidic residues; sequence KVPKEEKAKKEAEEKARLAAEEKQKEMEAKS. Over residues 631 to 641 the composition is skewed to polar residues; it reads ETKGQVNGTRT. Basic and acidic residues-rich tracts occupy residues 642-659 and 665-692; these read SKGD…KAGE and DLKD…DGTK. Residues 698–712 are compositionally biased toward low complexity; that stretch reads SPAPSTSSTSRLTLP.

The protein belongs to the cyclic nucleotide phosphodiesterase family. PDE1 subfamily. As to quaternary structure, homodimer. The cofactor is Zn(2+). It depends on Mg(2+) as a cofactor. In terms of tissue distribution, highly expressed in olfactory epithelium and at moderate levels, in cerebellum, as well as weakly in forebrain, testis, heart and lung. In the olfactory epithelium, expressed by sensory neurons, but not epithelial cells.

It localises to the lysosome. It carries out the reaction a nucleoside 3',5'-cyclic phosphate + H2O = a nucleoside 5'-phosphate + H(+). The catalysed reaction is 3',5'-cyclic GMP + H2O = GMP + H(+). The enzyme catalyses 3',5'-cyclic AMP + H2O = AMP + H(+). Type I PDE are activated by the binding of calmodulin in the presence of Ca(2+). Calmodulin-dependent cyclic nucleotide phosphodiesterase with a dual specificity for the second messengers cAMP and cGMP, which are key regulators of many important physiological processes. Has a high affinity for both cAMP and cGMP. Modulates the amplitude and duration of the cAMP signal in sensory cilia in response to odorant stimulation, hence contributing to the generation of action potentials. Regulates smooth muscle cell proliferation. Regulates the stability of growth factor receptors, including PDGFRB. This chain is Dual specificity calcium/calmodulin-dependent 3',5'-cyclic nucleotide phosphodiesterase 1C, found in Rattus norvegicus (Rat).